The sequence spans 366 residues: UDP-N-acetylglucosamine--N-acetylmuramyl-(pentapeptide) pyrophosphoryl-undecaprenol N-acetylglucosamine transferase (366 aa).

UDP-N-acetyl-alpha-D-glucosamine is bound by residues 14 to 16 (TGG), asparagine 125, arginine 168, serine 196, and glutamine 297.

The protein belongs to the glycosyltransferase 28 family. MurG subfamily.

The protein localises to the cell inner membrane. It carries out the reaction di-trans,octa-cis-undecaprenyl diphospho-N-acetyl-alpha-D-muramoyl-L-alanyl-D-glutamyl-meso-2,6-diaminopimeloyl-D-alanyl-D-alanine + UDP-N-acetyl-alpha-D-glucosamine = di-trans,octa-cis-undecaprenyl diphospho-[N-acetyl-alpha-D-glucosaminyl-(1-&gt;4)]-N-acetyl-alpha-D-muramoyl-L-alanyl-D-glutamyl-meso-2,6-diaminopimeloyl-D-alanyl-D-alanine + UDP + H(+). It functions in the pathway cell wall biogenesis; peptidoglycan biosynthesis. Functionally, cell wall formation. Catalyzes the transfer of a GlcNAc subunit on undecaprenyl-pyrophosphoryl-MurNAc-pentapeptide (lipid intermediate I) to form undecaprenyl-pyrophosphoryl-MurNAc-(pentapeptide)GlcNAc (lipid intermediate II). In Bradyrhizobium diazoefficiens (strain JCM 10833 / BCRC 13528 / IAM 13628 / NBRC 14792 / USDA 110), this protein is UDP-N-acetylglucosamine--N-acetylmuramyl-(pentapeptide) pyrophosphoryl-undecaprenol N-acetylglucosamine transferase.